The following is a 156-amino-acid chain: 6,7-dimethyl-8-ribityllumazine synthase (156 aa).

5-amino-6-(D-ribitylamino)uracil-binding positions include Phe-23, 57-59, and 81-83; these read AFE and AVI. 86–87 contacts (2S)-2-hydroxy-3-oxobutyl phosphate; sequence ST. His-89 functions as the Proton donor in the catalytic mechanism. 5-amino-6-(D-ribitylamino)uracil is bound at residue Phe-114. Arg-128 is a (2S)-2-hydroxy-3-oxobutyl phosphate binding site.

It belongs to the DMRL synthase family.

The enzyme catalyses (2S)-2-hydroxy-3-oxobutyl phosphate + 5-amino-6-(D-ribitylamino)uracil = 6,7-dimethyl-8-(1-D-ribityl)lumazine + phosphate + 2 H2O + H(+). It participates in cofactor biosynthesis; riboflavin biosynthesis; riboflavin from 2-hydroxy-3-oxobutyl phosphate and 5-amino-6-(D-ribitylamino)uracil: step 1/2. Catalyzes the formation of 6,7-dimethyl-8-ribityllumazine by condensation of 5-amino-6-(D-ribitylamino)uracil with 3,4-dihydroxy-2-butanone 4-phosphate. This is the penultimate step in the biosynthesis of riboflavin. The polypeptide is 6,7-dimethyl-8-ribityllumazine synthase (Campylobacter lari (strain RM2100 / D67 / ATCC BAA-1060)).